Here is a 172-residue protein sequence, read N- to C-terminus: Translation initiation factor IF-3 (172 aa).

It belongs to the IF-3 family. As to quaternary structure, monomer.

The protein localises to the cytoplasm. IF-3 binds to the 30S ribosomal subunit and shifts the equilibrium between 70S ribosomes and their 50S and 30S subunits in favor of the free subunits, thus enhancing the availability of 30S subunits on which protein synthesis initiation begins. This Bartonella quintana (strain Toulouse) (Rochalimaea quintana) protein is Translation initiation factor IF-3.